The chain runs to 569 residues: F-box-like/WD repeat-containing protein TBL1X (569 aa).

Residues 55 to 87 (TSDEVNFLVYRYLQESGFSHSAFTFGIESHISQ) form the LisH domain. The F-box-like domain occupies 92 to 137 (GTLVPPAALISILQKGLQYVEAEISINEDGTVFDGRPIESLSLIDA). At Lys153 the chain carries N6-acetyllysine. Positions 170 to 195 (TSASVSQQNPSKNREATVNGEENRAH) are disordered. Ser175 is subject to Phosphoserine. 8 WD repeats span residues 222–261 (GHESEVFICAWNPVSDLLASGSGDSTARIWNLNENSNGGS), 278–317 (PSNKDVTSLDWNTNGTLLATGSYDGFARIWTEDGNLASTL), 319–358 (QHKGPIFALKWNRKGNYILSAGVDKTTIIWDAHTGEAKQQ), 361–401 (FHSA…KTFQ), 402–441 (GHTNEVNAIKWDPSGMLLASCSDDMTLKIWSMKQEVCIHD), 444–492 (AHNK…CTHT), 495–534 (KHQEPVYSVAFSPDGRYLASGSFDKCVHIWNTQSGNLVHS), and 536–568 (RGTGGIFEVCWNARGDKVGASASDGSVCVLDLR). Lys332 participates in a covalent cross-link: Glycyl lysine isopeptide (Lys-Gly) (interchain with G-Cter in SUMO2).

Belongs to the WD repeat EBI family. In terms of assembly, homotetramer; dimer of dimers. Component of the N-Cor repressor complex, at least composed of NCOR1, NCOR2, HDAC3, TBL1X, TBL1R, CORO2A and GPS2. Interacts with GPS2 (when sumoylated); leading to protect GPS2 against degradation by the proteasome. Component of a E3 ubiquitin ligase complex containing UBE2D1, SIAH1, CACYBP/SIP, SKP1, APC and TBL1X. Probably part of other corepressor complexes, that do not contain NCOR1 and NCOR2. Interacts with histones H2B, H3a and H4. Interacts with MECP2; recruits TBL1X to the heterochromatin foci. Interacts with USP44.

It is found in the nucleus. In terms of biological role, F-box-like protein involved in the recruitment of the ubiquitin/19S proteasome complex to nuclear receptor-regulated transcription units. Plays an essential role in transcription activation mediated by nuclear receptors. Probably acts as integral component of corepressor complexes that mediates the recruitment of the 19S proteasome complex, leading to the subsequent proteasomal degradation of transcription repressor complexes, thereby allowing cofactor exchange. The protein is F-box-like/WD repeat-containing protein TBL1X (TBL1X) of Macaca fascicularis (Crab-eating macaque).